The sequence spans 340 residues: GTP 3',8-cyclase (340 aa).

A Radical SAM core domain is found at 8 to 230 (KLGRPIRDLR…EQHFEIDPVE (223 aa)). Arginine 17 contributes to the GTP binding site. Residues cysteine 24 and cysteine 28 each contribute to the [4Fe-4S] cluster site. Tyrosine 30 is an S-adenosyl-L-methionine binding site. [4Fe-4S] cluster is bound at residue cysteine 31. Residue arginine 71 participates in GTP binding. Glycine 75 is an S-adenosyl-L-methionine binding site. Threonine 102 is a GTP binding site. Serine 126 provides a ligand contact to S-adenosyl-L-methionine. Residue lysine 163 coordinates GTP. Methionine 197 is a binding site for S-adenosyl-L-methionine. Cysteine 261 and cysteine 264 together coordinate [4Fe-4S] cluster. A GTP-binding site is contributed by 266–268 (RAR). Cysteine 278 contributes to the [4Fe-4S] cluster binding site.

This sequence belongs to the radical SAM superfamily. MoaA family. In terms of assembly, monomer and homodimer. The cofactor is [4Fe-4S] cluster.

It carries out the reaction GTP + AH2 + S-adenosyl-L-methionine = (8S)-3',8-cyclo-7,8-dihydroguanosine 5'-triphosphate + 5'-deoxyadenosine + L-methionine + A + H(+). It functions in the pathway cofactor biosynthesis; molybdopterin biosynthesis. Functionally, catalyzes the cyclization of GTP to (8S)-3',8-cyclo-7,8-dihydroguanosine 5'-triphosphate. The polypeptide is GTP 3',8-cyclase (Staphylococcus aureus (strain bovine RF122 / ET3-1)).